The sequence spans 358 residues: Biotin synthase (358 aa).

In terms of domain architecture, Radical SAM core spans 47–306 (KNNSKIKLCA…ALYKIIMPYA (260 aa)). Residues Cys-65, Cys-69, and Cys-72 each contribute to the [4Fe-4S] cluster site. Residues Ser-142, Cys-174, Cys-233, and Arg-309 each coordinate [2Fe-2S] cluster.

Belongs to the radical SAM superfamily. Biotin synthase family. In terms of assembly, homodimer. [4Fe-4S] cluster serves as cofactor. The cofactor is [2Fe-2S] cluster.

The catalysed reaction is (4R,5S)-dethiobiotin + (sulfur carrier)-SH + 2 reduced [2Fe-2S]-[ferredoxin] + 2 S-adenosyl-L-methionine = (sulfur carrier)-H + biotin + 2 5'-deoxyadenosine + 2 L-methionine + 2 oxidized [2Fe-2S]-[ferredoxin]. It functions in the pathway cofactor biosynthesis; biotin biosynthesis; biotin from 7,8-diaminononanoate: step 2/2. Its function is as follows. Catalyzes the conversion of dethiobiotin (DTB) to biotin by the insertion of a sulfur atom into dethiobiotin via a radical-based mechanism. This chain is Biotin synthase, found in Methanocaldococcus jannaschii (strain ATCC 43067 / DSM 2661 / JAL-1 / JCM 10045 / NBRC 100440) (Methanococcus jannaschii).